We begin with the raw amino-acid sequence, 167 residues long: Large ribosomal subunit protein uL10 (167 aa).

The protein belongs to the universal ribosomal protein uL10 family. As to quaternary structure, part of the ribosomal stalk of the 50S ribosomal subunit. The N-terminus interacts with L11 and the large rRNA to form the base of the stalk. The C-terminus forms an elongated spine to which L12 dimers bind in a sequential fashion forming a multimeric L10(L12)X complex.

In terms of biological role, forms part of the ribosomal stalk, playing a central role in the interaction of the ribosome with GTP-bound translation factors. The protein is Large ribosomal subunit protein uL10 of Mycoplasma mobile (strain ATCC 43663 / 163K / NCTC 11711) (Mesomycoplasma mobile).